A 908-amino-acid polypeptide reads, in one-letter code: UPF0182 protein Csac_0864 (908 aa).

Helical transmembrane passes span 22-42 (FVIS…DLFL), 62-82 (FYVK…VFFV), 98-118 (ISLL…ALIA), 166-186 (FLFY…IVLY), 208-228 (HIFF…KYEM), 253-273 (YFRL…YFFI), and 286-306 (SYIG…YFVV).

This sequence belongs to the UPF0182 family.

It localises to the cell membrane. The chain is UPF0182 protein Csac_0864 from Caldicellulosiruptor saccharolyticus (strain ATCC 43494 / DSM 8903 / Tp8T 6331).